A 283-amino-acid chain; its full sequence is ATP phosphoribosyltransferase (283 aa).

This sequence belongs to the ATP phosphoribosyltransferase family. Long subfamily. The cofactor is Mg(2+).

It localises to the cytoplasm. The enzyme catalyses 1-(5-phospho-beta-D-ribosyl)-ATP + diphosphate = 5-phospho-alpha-D-ribose 1-diphosphate + ATP. It functions in the pathway amino-acid biosynthesis; L-histidine biosynthesis; L-histidine from 5-phospho-alpha-D-ribose 1-diphosphate: step 1/9. Feedback inhibited by histidine. Functionally, catalyzes the condensation of ATP and 5-phosphoribose 1-diphosphate to form N'-(5'-phosphoribosyl)-ATP (PR-ATP). Has a crucial role in the pathway because the rate of histidine biosynthesis seems to be controlled primarily by regulation of HisG enzymatic activity. The chain is ATP phosphoribosyltransferase from Bifidobacterium longum (strain NCC 2705).